Here is a 160-residue protein sequence, read N- to C-terminus: Ribosomal RNA large subunit methyltransferase H (160 aa).

S-adenosyl-L-methionine-binding positions include L77, G109, and F128–F133.

It belongs to the RNA methyltransferase RlmH family. In terms of assembly, homodimer.

It is found in the cytoplasm. The catalysed reaction is pseudouridine(1915) in 23S rRNA + S-adenosyl-L-methionine = N(3)-methylpseudouridine(1915) in 23S rRNA + S-adenosyl-L-homocysteine + H(+). In terms of biological role, specifically methylates the pseudouridine at position 1915 (m3Psi1915) in 23S rRNA. The chain is Ribosomal RNA large subunit methyltransferase H from Desulfitobacterium hafniense (strain DSM 10664 / DCB-2).